The sequence spans 267 residues: tRNA pseudouridine synthase A (267 aa).

Asp53 (nucleophile) is an active-site residue. Position 114 (Tyr114) interacts with substrate.

Belongs to the tRNA pseudouridine synthase TruA family. Homodimer.

The catalysed reaction is uridine(38/39/40) in tRNA = pseudouridine(38/39/40) in tRNA. Formation of pseudouridine at positions 38, 39 and 40 in the anticodon stem and loop of transfer RNAs. The polypeptide is tRNA pseudouridine synthase A (Chlamydia trachomatis serovar A (strain ATCC VR-571B / DSM 19440 / HAR-13)).